Here is a 363-residue protein sequence, read N- to C-terminus: Peptide chain release factor 1 (363 aa).

Gln-237 carries the post-translational modification N5-methylglutamine. Basic and acidic residues predominate over residues 284–296; sequence EDEKRRSAEESTR. Residues 284–305 are disordered; the sequence is EDEKRRSAEESTRRSLVASGDR.

The protein belongs to the prokaryotic/mitochondrial release factor family. Methylated by PrmC. Methylation increases the termination efficiency of RF1.

Its subcellular location is the cytoplasm. Functionally, peptide chain release factor 1 directs the termination of translation in response to the peptide chain termination codons UAG and UAA. This chain is Peptide chain release factor 1, found in Shewanella baltica (strain OS185).